The chain runs to 589 residues: tRNA (guanine(26)-N(2))-dimethyltransferase 2 (589 aa).

Positions 9 to 465 constitute a Trm1 methyltransferase domain; that stretch reads TVIKEGEAEI…APMEVIWDIM (457 aa). Arginine 36 provides a ligand contact to S-adenosyl-L-methionine. The segment at 51-122 is disordered; the sequence is KQEHEAKSSK…RFAPREPKPP (72 aa). Composition is skewed to basic and acidic residues over residues 68–81 and 106–122; these read VIEKDASEASKEET and DPAKTTERFAPREPKPP. Residues arginine 134, aspartate 152, and valine 185 each contribute to the S-adenosyl-L-methionine site. Residues cysteine 315, cysteine 318, cysteine 350, and cysteine 353 each coordinate Zn(2+). The disordered stretch occupies residues 550-589; that stretch reads LSQHHEELKEEDEEAEPEDNVQDKVDPKRQKTATDNITST. Residues 558–569 show a composition bias toward acidic residues; it reads KEEDEEAEPEDN.

It belongs to the class I-like SAM-binding methyltransferase superfamily. Trm1 family.

It catalyses the reaction guanosine(26) in tRNA + 2 S-adenosyl-L-methionine = N(2)-dimethylguanosine(26) in tRNA + 2 S-adenosyl-L-homocysteine + 2 H(+). Dimethylates a single guanine residue at position 26 of most tRNAs using S-adenosyl-L-methionine as donor of the methyl groups. The protein is tRNA (guanine(26)-N(2))-dimethyltransferase 2 of Arabidopsis thaliana (Mouse-ear cress).